Consider the following 150-residue polypeptide: Urease accessory protein UreE (150 aa).

The protein belongs to the UreE family.

It localises to the cytoplasm. Its function is as follows. Involved in urease metallocenter assembly. Binds nickel. Probably functions as a nickel donor during metallocenter assembly. This Staphylococcus epidermidis (strain ATCC 35984 / DSM 28319 / BCRC 17069 / CCUG 31568 / BM 3577 / RP62A) protein is Urease accessory protein UreE.